The sequence spans 283 residues: 4-diphosphocytidyl-2-C-methyl-D-erythritol kinase (283 aa).

Residue Lys-10 is part of the active site. Residue 99-109 (PMGGGLGGGSS) coordinates ATP. Residue Asp-141 is part of the active site.

This sequence belongs to the GHMP kinase family. IspE subfamily. As to quaternary structure, homodimer.

The enzyme catalyses 4-CDP-2-C-methyl-D-erythritol + ATP = 4-CDP-2-C-methyl-D-erythritol 2-phosphate + ADP + H(+). It functions in the pathway isoprenoid biosynthesis; isopentenyl diphosphate biosynthesis via DXP pathway; isopentenyl diphosphate from 1-deoxy-D-xylulose 5-phosphate: step 3/6. Its function is as follows. Catalyzes the phosphorylation of the position 2 hydroxy group of 4-diphosphocytidyl-2C-methyl-D-erythritol. This chain is 4-diphosphocytidyl-2-C-methyl-D-erythritol kinase, found in Escherichia coli (strain 55989 / EAEC).